The sequence spans 152 residues: Deoxyuridine 5'-triphosphate nucleotidohydrolase (152 aa).

Residues 71–73, Asn-84, 88–90, and Met-98 each bind substrate; these read RSG and LID.

It belongs to the dUTPase family. Mg(2+) serves as cofactor.

The enzyme catalyses dUTP + H2O = dUMP + diphosphate + H(+). It participates in pyrimidine metabolism; dUMP biosynthesis; dUMP from dCTP (dUTP route): step 2/2. Its function is as follows. This enzyme is involved in nucleotide metabolism: it produces dUMP, the immediate precursor of thymidine nucleotides and it decreases the intracellular concentration of dUTP so that uracil cannot be incorporated into DNA. The chain is Deoxyuridine 5'-triphosphate nucleotidohydrolase from Klebsiella pneumoniae (strain 342).